The sequence spans 223 residues: ATP phosphoribosyltransferase (223 aa).

Belongs to the ATP phosphoribosyltransferase family. Short subfamily. Heteromultimer composed of HisG and HisZ subunits.

Its subcellular location is the cytoplasm. It catalyses the reaction 1-(5-phospho-beta-D-ribosyl)-ATP + diphosphate = 5-phospho-alpha-D-ribose 1-diphosphate + ATP. It participates in amino-acid biosynthesis; L-histidine biosynthesis; L-histidine from 5-phospho-alpha-D-ribose 1-diphosphate: step 1/9. Its function is as follows. Catalyzes the condensation of ATP and 5-phosphoribose 1-diphosphate to form N'-(5'-phosphoribosyl)-ATP (PR-ATP). Has a crucial role in the pathway because the rate of histidine biosynthesis seems to be controlled primarily by regulation of HisG enzymatic activity. In Bordetella pertussis (strain Tohama I / ATCC BAA-589 / NCTC 13251), this protein is ATP phosphoribosyltransferase.